Consider the following 1198-residue polypeptide: Fibronectin type-III domain-containing protein 3A (1198 aa).

Residues 160–221 form a disordered region; the sequence is YGDVDAHSTH…PSPINEHNGL (62 aa). Positions 163–201 are enriched in basic and acidic residues; it reads VDAHSTHGRSNFRDERSSKTYERLQKKLKDRQGTQKDKM. Low complexity predominate over residues 202–214; the sequence is SSPPSSPQKCPSP. Residues Ser203, Ser207, and Ser213 each carry the phosphoserine modification. Fibronectin type-III domains follow at residues 268–369, 373–465, 469–562, 566–660, 664–757, 761–851, 861–950, 951–1045, and 1046–1151; these read NIVK…TLSC, IPNP…TSGC, MPAS…TCPD, IPVK…TPAV, PCLP…TAPG, QCKP…TPPS, EISD…TKPL, PPDP…TPKS, and VPAA…TEPP. Lys384 bears the N6-acetyllysine mark. The chain crosses the membrane as a helical span at residues 1177–1197; that stretch reads ILVLFAFFSILIAFIIQYFVI.

Belongs to the FNDC3 family. In terms of tissue distribution, expressed in the odontoblast and nerves in the dental pulp. Also expressed in trachea and to a lesser extent in the brain, liver, lung and kidney.

It is found in the golgi apparatus membrane. Functionally, mediates spermatid-Sertoli adhesion during spermatogenesis. This is Fibronectin type-III domain-containing protein 3A (FNDC3A) from Homo sapiens (Human).